The chain runs to 326 residues: Vomeronasal type-1 receptor 100 (326 aa).

At 1–32 the chain is on the extracellular side; it reads MSEFPFFSPQPLFSYMMNKNSRVHTDSNIRNT. The chain crosses the membrane as a helical span at residues 33 to 53; it reads FFTEIGIGILANSFLLLFHIF. Topologically, residues 54–70 are cytoplasmic; it reads KFIRGQRSRLTDLPIGL. The helical transmembrane segment at 71–91 threads the bilayer; the sequence is LSLIHLLMLLMGAFIAIDIFI. Over 92 to 104 the chain is Extracellular; that stretch reads SWRGWDDIICKFL. A disulfide bond links Cys101 and Cys188. Residues 105-127 traverse the membrane as a helical segment; sequence VYLYRSFRGLSLCTTCMLSVLQA. The Cytoplasmic segment spans residues 128–149; sequence ITLSPRSSCLAKFKHKSPHHVS. A helical transmembrane segment spans residues 150–170; sequence CAIISLSILYMFISSHLLVSI. Over 171–209 the chain is Extracellular; that stretch reads NATPNLTTNNFMQVTQSCYIIPLSYLMQSMFSTLLAIRD. A glycan (N-linked (GlcNAc...) asparagine) is linked at Asn175. Residues 210–230 traverse the membrane as a helical segment; that stretch reads ISLISLMVLSTCYMVVLLCRH. Over 231-254 the chain is Cytoplasmic; it reads RNQIQHLQGTNLSPKASPEQRATQ. A helical membrane pass occupies residues 255-275; the sequence is TILMLMTFFVLMSIFDSIVSC. Residues 276 to 285 are Extracellular-facing; it reads SRTMYLNDPT. Residues 286–306 form a helical membrane-spanning segment; that stretch reads SYYIQIFVVYIYATVSPFVFM. At 307–326 the chain is on the cytoplasmic side; the sequence is STEKHIVNFLKSMCVRVKNV.

This sequence belongs to the G-protein coupled receptor 1 family. As to expression, expressed in 1-4% of neurons of the vomeronasal organ. Only one pheromone receptor gene may be expressed in a particular neuron. Not expressed in the main olfactory epithelium.

It localises to the cell membrane. Its function is as follows. Putative pheromone receptor implicated in the regulation of social as well as reproductive behavior. In Rattus norvegicus (Rat), this protein is Vomeronasal type-1 receptor 100 (Vom1r100).